A 445-amino-acid chain; its full sequence is UDP-N-acetylmuramate--L-alanine ligase (445 aa).

113-119 (GSHGKTS) serves as a coordination point for ATP.

Belongs to the MurCDEF family.

The protein resides in the cytoplasm. It carries out the reaction UDP-N-acetyl-alpha-D-muramate + L-alanine + ATP = UDP-N-acetyl-alpha-D-muramoyl-L-alanine + ADP + phosphate + H(+). The protein operates within cell wall biogenesis; peptidoglycan biosynthesis. Functionally, cell wall formation. The protein is UDP-N-acetylmuramate--L-alanine ligase of Enterococcus faecalis (strain ATCC 700802 / V583).